We begin with the raw amino-acid sequence, 188 residues long: NAD(P)H-quinone oxidoreductase subunit J (188 aa).

Belongs to the complex I 30 kDa subunit family. NDH-1 can be composed of about 15 different subunits; different subcomplexes with different compositions have been identified which probably have different functions.

Its subcellular location is the cellular thylakoid membrane. The catalysed reaction is a plastoquinone + NADH + (n+1) H(+)(in) = a plastoquinol + NAD(+) + n H(+)(out). The enzyme catalyses a plastoquinone + NADPH + (n+1) H(+)(in) = a plastoquinol + NADP(+) + n H(+)(out). NDH-1 shuttles electrons from an unknown electron donor, via FMN and iron-sulfur (Fe-S) centers, to quinones in the respiratory and/or the photosynthetic chain. The immediate electron acceptor for the enzyme in this species is believed to be plastoquinone. Couples the redox reaction to proton translocation, and thus conserves the redox energy in a proton gradient. Cyanobacterial NDH-1 also plays a role in inorganic carbon-concentration. This Parasynechococcus marenigrum (strain WH8102) protein is NAD(P)H-quinone oxidoreductase subunit J.